The primary structure comprises 130 residues: Protein ApaG (130 aa).

The ApaG domain maps to 3–127 (SAVTRGIEVT…FSLDVPEQRR (125 aa)).

This Brucella canis (strain ATCC 23365 / NCTC 10854 / RM-666) protein is Protein ApaG.